The following is a 60-amino-acid chain: Large ribosomal subunit protein bL32 (60 aa).

The interval 1–27 (MAVPRNRLSNARKNSKRAHHAKKPKSL) is disordered. Over residues 13–25 (KNSKRAHHAKKPK) the composition is skewed to basic residues.

It belongs to the bacterial ribosomal protein bL32 family.

The chain is Large ribosomal subunit protein bL32 from Protochlamydia amoebophila (strain UWE25).